We begin with the raw amino-acid sequence, 452 residues long: uncharacterized protein (452 aa).

Belongs to the HypE family.

This is an uncharacterized protein from Methanocaldococcus jannaschii (strain ATCC 43067 / DSM 2661 / JAL-1 / JCM 10045 / NBRC 100440) (Methanococcus jannaschii).